We begin with the raw amino-acid sequence, 215 residues long: Deoxyribose-phosphate aldolase (215 aa).

The active-site Proton donor/acceptor is the Asp-89. Catalysis depends on Lys-150, which acts as the Schiff-base intermediate with acetaldehyde. Residue Lys-174 is the Proton donor/acceptor of the active site.

This sequence belongs to the DeoC/FbaB aldolase family. DeoC type 1 subfamily.

The protein localises to the cytoplasm. It carries out the reaction 2-deoxy-D-ribose 5-phosphate = D-glyceraldehyde 3-phosphate + acetaldehyde. It participates in carbohydrate degradation; 2-deoxy-D-ribose 1-phosphate degradation; D-glyceraldehyde 3-phosphate and acetaldehyde from 2-deoxy-alpha-D-ribose 1-phosphate: step 2/2. Functionally, catalyzes a reversible aldol reaction between acetaldehyde and D-glyceraldehyde 3-phosphate to generate 2-deoxy-D-ribose 5-phosphate. The chain is Deoxyribose-phosphate aldolase from Natronomonas pharaonis (strain ATCC 35678 / DSM 2160 / CIP 103997 / JCM 8858 / NBRC 14720 / NCIMB 2260 / Gabara) (Halobacterium pharaonis).